We begin with the raw amino-acid sequence, 233 residues long: Small ribosomal subunit protein uS3 (233 aa).

One can recognise a KH type-2 domain in the interval 39–107 (VRQFLASELT…PSQINIAEVR (69 aa)).

The protein belongs to the universal ribosomal protein uS3 family. Part of the 30S ribosomal subunit. Forms a tight complex with proteins S10 and S14.

Binds the lower part of the 30S subunit head. Binds mRNA in the 70S ribosome, positioning it for translation. The protein is Small ribosomal subunit protein uS3 of Baumannia cicadellinicola subsp. Homalodisca coagulata.